The following is a 129-amino-acid chain: Histone H2A-IV (129 aa).

The protein belongs to the histone H2A family. In terms of assembly, the nucleosome is a histone octamer containing two molecules each of H2A, H2B, H3 and H4 assembled in one H3-H4 heterotetramer and two H2A-H2B heterodimers. The octamer wraps approximately 147 bp of DNA.

It localises to the nucleus. Its subcellular location is the chromosome. Its function is as follows. Core component of nucleosome. Nucleosomes wrap and compact DNA into chromatin, limiting DNA accessibility to the cellular machineries which require DNA as a template. Histones thereby play a central role in transcription regulation, DNA repair, DNA replication and chromosomal stability. DNA accessibility is regulated via a complex set of post-translational modifications of histones, also called histone code, and nucleosome remodeling. This chain is Histone H2A-IV, found in Volvox carteri (Green alga).